We begin with the raw amino-acid sequence, 329 residues long: GMP reductase (329 aa).

The active-site Thioimidate intermediate is Cys178. 207 to 230 (VIADGGIRTHGDIAKSIRMGATMV) is a binding site for NADP(+).

It belongs to the IMPDH/GMPR family. GuaC type 2 subfamily.

It carries out the reaction IMP + NH4(+) + NADP(+) = GMP + NADPH + 2 H(+). In terms of biological role, catalyzes the irreversible NADPH-dependent deamination of GMP to IMP. It functions in the conversion of nucleobase, nucleoside and nucleotide derivatives of G to A nucleotides, and in maintaining the intracellular balance of A and G nucleotides. The chain is GMP reductase from Lactococcus lactis subsp. cremoris (strain SK11).